The sequence spans 184 residues: Protein PLANT CADMIUM RESISTANCE 5 (184 aa).

Positions 1–26 (MGRPVGQTNQAQPSVQHTASPSNKVS) are enriched in polar residues. Residues 1-33 (MGRPVGQTNQAQPSVQHTASPSNKVSHNGGIGK) are disordered. A helical transmembrane segment spans residues 94-114 (AGLLYGALFFTGASFVYSYMF).

This sequence belongs to the cornifelin family.

Its subcellular location is the membrane. May be involved in heavy metals transport. This Arabidopsis thaliana (Mouse-ear cress) protein is Protein PLANT CADMIUM RESISTANCE 5 (PCR5).